The primary structure comprises 74 residues: Conotoxin SIIID (74 aa).

An N-terminal signal peptide occupies residues 1-20 (MMSKLGVLLTVCLLLFPLTA). The propeptide occupies 21-53 (LPLDGDQPADQLEDRMQDDISSEQYPSFVRRQK). 3 disulfides stabilise this stretch: cysteine 54–cysteine 71, cysteine 55–cysteine 73, and cysteine 61–cysteine 74.

This sequence belongs to the conotoxin M superfamily. Three disulfide isomers have been synthesized and tested. SIIID with the disulfide pairing 1-4;2-5;3-6 is the most active. Expressed by the venom duct.

It is found in the secreted. In terms of biological role, the short synthetic peptide SIIID (range 54-74, with disulfide pairing 1-4, 2-5 and 3-6) reversibly inhibits human alpha-7/CHRNA7 acetylcholine receptor (IC(50)=880 nM). Shows a paralytic effect in fish. In Conus striatus (Striated cone), this protein is Conotoxin SIIID.